A 387-amino-acid polypeptide reads, in one-letter code: F-box protein At5g41490 (387 aa).

An F-box domain is found at 2-47 (ATMITNLRRDLIEEIISRVPLRSMKAVRLTCKSWNNISKSEIFTKM).

This is F-box protein At5g41490 from Arabidopsis thaliana (Mouse-ear cress).